Consider the following 110-residue polypeptide: Large ribosomal subunit protein uL24 (110 aa).

Belongs to the universal ribosomal protein uL24 family. Part of the 50S ribosomal subunit.

One of two assembly initiator proteins, it binds directly to the 5'-end of the 23S rRNA, where it nucleates assembly of the 50S subunit. Functionally, one of the proteins that surrounds the polypeptide exit tunnel on the outside of the subunit. The protein is Large ribosomal subunit protein uL24 of Roseiflexus castenholzii (strain DSM 13941 / HLO8).